The following is a 460-amino-acid chain: A-type ATP synthase subunit B (460 aa).

It belongs to the ATPase alpha/beta chains family. As to quaternary structure, has multiple subunits with at least A(3), B(3), C, D, E, F, H, I and proteolipid K(x).

Its subcellular location is the cell membrane. Component of the A-type ATP synthase that produces ATP from ADP in the presence of a proton gradient across the membrane. The B chain is a regulatory subunit. The sequence is that of A-type ATP synthase subunit B from Thermoplasma volcanium (strain ATCC 51530 / DSM 4299 / JCM 9571 / NBRC 15438 / GSS1).